A 276-amino-acid polypeptide reads, in one-letter code: F-actin-capping protein subunit beta (276 aa).

The protein belongs to the F-actin-capping protein beta subunit family. In terms of assembly, component of the F-actin capping complex, composed of a heterodimer of an alpha and a beta subunit. Subunit of dynactin, a multiprotein complex part of a tripartite complex with dynein and a adapter, such as BICDL1, BICD2 or HOOK3.

The protein localises to the cytoplasm. It is found in the cytoskeleton. In terms of biological role, F-actin-capping proteins bind in a Ca(2+)-independent manner to the fast growing ends of actin filaments (barbed end) thereby blocking the exchange of subunits at these ends. Unlike other capping proteins (such as gelsolin and severin), these proteins do not sever actin filaments. Forms, with CAPZB, the barbed end of the fast growing ends of actin filaments in the dynactin complex and stabilizes dynactin structure. The dynactin multiprotein complex activates the molecular motor dynein for ultra-processive transport along microtubules. This Drosophila melanogaster (Fruit fly) protein is F-actin-capping protein subunit beta (cpb).